We begin with the raw amino-acid sequence, 331 residues long: Neurogenic differentiation factor 4 (331 aa).

The segment at 1-80 (MSKTFVKSKE…GPKKKKMTKA (80 aa)) is disordered. The segment covering 52 to 64 (DSIEEEEEEEEDG) has biased composition (acidic residues). Over residues 67–79 (PKRRGPKKKKMTK) the composition is skewed to basic residues. Positions 87–139 (ARRVKANARERTRMHGLNDALDNLRRVMPCYSKTQKLSKIETLRLARNYIWAL) constitute a bHLH domain. The interval 246-265 (TPPYEGPLTPPLSISGNFSL) is disordered.

In terms of assembly, efficient DNA binding requires dimerization with another bHLH protein. In terms of processing, serine or threonine phosphorylation within the basic region may regulate neurogenic activity.

Its subcellular location is the nucleus. Functionally, probably acts as a transcriptional activator. Mediates neuronal differentiation. Required for the regulation of amacrine cell fate specification in the retina. This is Neurogenic differentiation factor 4 (NEUROD4) from Homo sapiens (Human).